The following is a 356-amino-acid chain: Vacuolar protein sorting-associated protein 26 (356 aa).

Residues 301–356 (MRRPGTEDDEEEKQTTSIPGTQKFTAPAPVEHPKPESPRSDPKSGSTSPDDNSDSS) are disordered. Positions 315-324 (TTSIPGTQKF) are enriched in polar residues. Residues 331-342 (EHPKPESPRSDP) are compositionally biased toward basic and acidic residues.

Belongs to the VPS26 family.

Its function is as follows. May play a role in vesicular protein sorting, similar to the yeast retromer proteins. This is Vacuolar protein sorting-associated protein 26 (vps-26) from Caenorhabditis elegans.